Here is a 426-residue protein sequence, read N- to C-terminus: Homeobox protein knotted-1-like LET12 (426 aa).

3 disordered regions span residues M1–A26, Q85–W158, and G270–D290. Residues Q15–Q24 are compositionally biased toward low complexity. Gly residues predominate over residues A104–G114. Residues E139 to N151 are compositionally biased toward low complexity. One can recognise an ELK domain in the interval E327–I347. A DNA-binding region (homeobox; TALE-type) is located at residues L348–N411. The tract at residues R406–R426 is disordered. The segment covering S413 to R426 has biased composition (low complexity).

It belongs to the TALE/KNOX homeobox family. As to expression, ubiquitously expressed in the mature plant.

The protein localises to the nucleus. Its function is as follows. May have a role to play in formative events in ovule and embryo morphogenesis. The protein is Homeobox protein knotted-1-like LET12 (LET12) of Solanum lycopersicum (Tomato).